The sequence spans 648 residues: Acyl-CoA-binding domain-containing protein 5 (648 aa).

The ACB domain maps to 13 to 107; the sequence is YPERFYAAAS…LEEADPGWYP (95 aa). An acyl-CoA-binding positions include Lys34, 49 to 53, and Lys75; that span reads YTLHQ. Kelch repeat units lie at residues 196–244, 256–306, 307–357, 359–408, 409–457, and 464–509; these read KMYM…KLTH, QLLS…LVGK, SLVI…VHAE, YLLI…TIGE, NWYI…LVVS, and IVVA…AVNN. Ser517 bears the Phosphoserine mark. A coiled-coil region spans residues 520 to 632; the sequence is KVEGKADRII…AATMNAKRQS (113 aa). Residues 625-634 are compositionally biased toward polar residues; it reads TMNAKRQSSG. The disordered stretch occupies residues 625–648; the sequence is TMNAKRQSSGGVWGWLAGTPPPKT.

The protein belongs to the ACBP family. Expressed in roots, stems, leaves, flowers and siliques.

It localises to the cytoplasm. Functionally, binds medium- and long-chain acyl-CoA esters with very high affinity. Can interact in vitro with oleoyl-CoA, barely with palmitoyl-CoA, but not with arachidonyl-CoA. May function as an intracellular carrier of acyl-CoA esters. The chain is Acyl-CoA-binding domain-containing protein 5 (ACBP5) from Arabidopsis thaliana (Mouse-ear cress).